A 330-amino-acid polypeptide reads, in one-letter code: Glycerol-3-phosphate dehydrogenase [NAD(P)+] (330 aa).

Residues Ser-10, Trp-11, Arg-31, and Lys-104 each coordinate NADPH. Lys-104, Gly-131, and Ser-133 together coordinate sn-glycerol 3-phosphate. Residue Ala-135 participates in NADPH binding. 5 residues coordinate sn-glycerol 3-phosphate: Lys-186, Asp-239, Ser-249, Arg-250, and Asn-251. Lys-186 (proton acceptor) is an active-site residue. Arg-250 provides a ligand contact to NADPH. NADPH is bound by residues Val-274 and Glu-276.

The protein belongs to the NAD-dependent glycerol-3-phosphate dehydrogenase family.

It localises to the cytoplasm. The enzyme catalyses sn-glycerol 3-phosphate + NAD(+) = dihydroxyacetone phosphate + NADH + H(+). It catalyses the reaction sn-glycerol 3-phosphate + NADP(+) = dihydroxyacetone phosphate + NADPH + H(+). It functions in the pathway membrane lipid metabolism; glycerophospholipid metabolism. Catalyzes the reduction of the glycolytic intermediate dihydroxyacetone phosphate (DHAP) to sn-glycerol 3-phosphate (G3P), the key precursor for phospholipid synthesis. This is Glycerol-3-phosphate dehydrogenase [NAD(P)+] from Thermoanaerobacter sp. (strain X514).